Consider the following 365-residue polypeptide: Cobalt-precorrin-5B C(1)-methyltransferase (365 aa).

Belongs to the CbiD family.

The enzyme catalyses Co-precorrin-5B + S-adenosyl-L-methionine = Co-precorrin-6A + S-adenosyl-L-homocysteine. It participates in cofactor biosynthesis; adenosylcobalamin biosynthesis; cob(II)yrinate a,c-diamide from sirohydrochlorin (anaerobic route): step 6/10. Its function is as follows. Catalyzes the methylation of C-1 in cobalt-precorrin-5B to form cobalt-precorrin-6A. In Clostridium perfringens (strain ATCC 13124 / DSM 756 / JCM 1290 / NCIMB 6125 / NCTC 8237 / Type A), this protein is Cobalt-precorrin-5B C(1)-methyltransferase.